A 513-amino-acid polypeptide reads, in one-letter code: 2-isopropylmalate synthase (513 aa).

Residues 4–268 (IKIFDTTLRD…ETGIKTELIY (265 aa)) form the Pyruvate carboxyltransferase domain. Residues D13, H203, H205, and N239 each coordinate Mn(2+). The tract at residues 392-513 (KLVHFHVHTG…GLLRKNGGAE (122 aa)) is regulatory domain.

Belongs to the alpha-IPM synthase/homocitrate synthase family. LeuA type 1 subfamily. Homodimer. It depends on Mn(2+) as a cofactor.

The protein resides in the cytoplasm. It carries out the reaction 3-methyl-2-oxobutanoate + acetyl-CoA + H2O = (2S)-2-isopropylmalate + CoA + H(+). It participates in amino-acid biosynthesis; L-leucine biosynthesis; L-leucine from 3-methyl-2-oxobutanoate: step 1/4. In terms of biological role, catalyzes the condensation of the acetyl group of acetyl-CoA with 3-methyl-2-oxobutanoate (2-ketoisovalerate) to form 3-carboxy-3-hydroxy-4-methylpentanoate (2-isopropylmalate). This Thermotoga maritima (strain ATCC 43589 / DSM 3109 / JCM 10099 / NBRC 100826 / MSB8) protein is 2-isopropylmalate synthase.